We begin with the raw amino-acid sequence, 444 residues long: Jacalin-related lectin 11 (444 aa).

Ala2 carries the N-acetylalanine modification. Jacalin-type lectin domains are found at residues 2-143, 146-290, and 298-442; these read ALKV…YFIK, SIQS…YYAP, and PEKL…HVTA.

It belongs to the jacalin lectin family.

This Arabidopsis thaliana (Mouse-ear cress) protein is Jacalin-related lectin 11 (JAL11).